Reading from the N-terminus, the 673-residue chain is MEELIKLNFPKSVEEYKKQSEELMETYDKGLKEIIEIPKEKRTFANTFEATDKLDVKFRNIESSLTFLANASTDEKVRDVANEVEATLSKYSIATSMREDLYQAYVDCCKQNNDFKESDLSKEQLRYVSKTLEGFEKNGLQLPKEKREKLKEIMTKISDNSIKFSKNIADDKTKLSFSMEQLNGIPKETIESFEKDESKPGNYFISLKYPDVIPTMKYCTVAETRKAVEFANGSKCIKENTPILEETCKLRFEAAQLLGFKDWASYKSNYLMVKSNDNIQSFEERMRKLLTPHAVTEYDRLKQLKKKIYLEKGGNPETYDDHYYSYDNAFYNNVMLVQDYQVDNNLVKEYFPFEVVIKGIFNCYQELLNVKFTEVPAYQPWHEEVKMYSCVDTADSNKLLGHFYIDLFPREGKYSHAAVWPLIPGYERADGEKQYPVAAMLCNFTKPTPTTPSLLTHDEVVTFFHEFGHVMHNMSTKVHYSMFSGTSVERDFVECPSQLFEFWCWNKDVLVNKLSGHYKDHSKKLPTDLVERMIAAKNLNVAIFYLRQIQLALFDNAIHSGNPANFTNTADLYHRIATDVALNPNQKGTNPGCSFGHLLGGYDAQYYSYLYSECFSASIFEIFDKHGVMNKELGARLRNQVLAVGGSQPSSETIENFLGSKPNEAAFLKTIGL.

Residue His-465 participates in Zn(2+) binding. Glu-466 is a catalytic residue. His-469 and His-472 together coordinate Zn(2+).

Belongs to the peptidase M3 family. Zn(2+) serves as cofactor.

The sequence is that of Thimet-like oligopeptidase from Dictyostelium discoideum (Social amoeba).